The following is a 196-amino-acid chain: Pyridoxal 5'-phosphate synthase subunit PdxT (196 aa).

46–48 provides a ligand contact to L-glutamine; that stretch reads GES. The Nucleophile role is filled by Cys-78. L-glutamine-binding positions include Arg-105 and 134–135; that span reads IR. Catalysis depends on charge relay system residues His-170 and Glu-172.

Belongs to the glutaminase PdxT/SNO family. In the presence of PdxS, forms a dodecamer of heterodimers. Only shows activity in the heterodimer.

It carries out the reaction aldehydo-D-ribose 5-phosphate + D-glyceraldehyde 3-phosphate + L-glutamine = pyridoxal 5'-phosphate + L-glutamate + phosphate + 3 H2O + H(+). The catalysed reaction is L-glutamine + H2O = L-glutamate + NH4(+). It functions in the pathway cofactor biosynthesis; pyridoxal 5'-phosphate biosynthesis. Its function is as follows. Catalyzes the hydrolysis of glutamine to glutamate and ammonia as part of the biosynthesis of pyridoxal 5'-phosphate. The resulting ammonia molecule is channeled to the active site of PdxS. In Pelotomaculum thermopropionicum (strain DSM 13744 / JCM 10971 / SI), this protein is Pyridoxal 5'-phosphate synthase subunit PdxT.